The following is a 62-amino-acid chain: Mastoparan-AF (62 aa).

Positions 1–25 (MKNTILILFTAFIALLGFFGMSAEA) are cleaved as a signal peptide. AXPX repeat units follow at residues 25 to 28 (ADPI), 29 to 32 (ADPI), 33 to 36 (ADPI), and 43 to 46 (ADPE). A propeptide spanning residues 26-47 (DPIADPIADPISGPNAEADPEA) is cleaved from the precursor. Phe61 is subject to Phenylalanine amide.

The protein belongs to the MCD family. Mastoparan subfamily. Expressed by the venom gland.

Its subcellular location is the secreted. It localises to the target cell membrane. Antimicrobial and mast cell degranulating peptide. Has broad spectrum antibacterial activity against both Gram-positive and Gram-negative bacteria (S.aureus MIC=16-32 ug/ml, S.xylosus MIC=1.5 ug/ml, S.alactolyticus MIC=8 ug/ml, C.koseri MIC=4 ug/ml, E.coli MIC=4-32 ug/ml, K.pneumoniae MIC=32 ug/ml, P.aerugiosa MIC=96 ug/ml, S.choleraesuis MIC=16 ug/ml, S.typhimurium MIC=32 ug/ml, V.parahamelytics MIC=16 ug/ml). Is also active on multi-antibiotic resistant hemolytic E.coli O157:H7. Acts by affecting membrane permeability. On E.coli O157:H7, acts through multiple membrane disruption patterns, including large perforations (full opening) at apical ends (hollow tubes), vesicle budding, forming dents, and membrane corrugation and invagination leading to irregular pits or pores. Exerts 40% lower membrane permeabilization activities on E.coli O157:H7 than on the non-pathogen E.coli BL21. Shows little hemolytic activities on sheep, chicken and human erythrocytes, but with a higher activity on chicken erythrocytes. Its mast cell degranulation activity may be related to the activation of G-protein coupled receptors in mast cells as well as interaction with other proteins located in cell endosomal membranes in the mast cells. The chain is Mastoparan-AF from Vespa affinis (Lesser banded hornet).